Here is a 630-residue protein sequence, read N- to C-terminus: Probable potassium transport system protein Kup (630 aa).

12 helical membrane-spanning segments follow: residues 17-37 (LAIA…LYSL), 51-71 (PSAI…VVGI), 105-125 (ITGL…GDAV), 144-164 (PQLS…LFWI), 175-195 (LFGP…IYHI), 218-238 (VLLA…AEAL), 255-275 (YVLV…LLLL), 283-303 (PFFL…STVA), 344-364 (IYVP…VIGF), 374-394 (YGIA…VVMV), 402-422 (LLVA…FGAN), and 428-448 (QGGW…MTWY).

The protein belongs to the HAK/KUP transporter (TC 2.A.72) family.

Its subcellular location is the cell inner membrane. The enzyme catalyses K(+)(in) + H(+)(in) = K(+)(out) + H(+)(out). Its function is as follows. Transport of potassium into the cell. Likely operates as a K(+):H(+) symporter. This Burkholderia pseudomallei (strain 1710b) protein is Probable potassium transport system protein Kup.